We begin with the raw amino-acid sequence, 197 residues long: UPF0301 protein AnaeK_4073 (197 aa).

It belongs to the UPF0301 (AlgH) family.

The sequence is that of UPF0301 protein AnaeK_4073 from Anaeromyxobacter sp. (strain K).